Consider the following 391-residue polypeptide: Tyrosinase-like protein phomQ2 (391 aa).

The tract at residues 1–21 (MDNVGCEASSSRDPKGKKAVG) is disordered. Residues 61–81 (IRGFICATIIFVVCLGALSYI) form a helical membrane-spanning segment. N-linked (GlcNAc...) asparagine glycans are attached at residues asparagine 97 and asparagine 141. Cu cation-binding residues include histidine 160 and histidine 169. 3 N-linked (GlcNAc...) asparagine glycosylation sites follow: asparagine 204, asparagine 246, and asparagine 261. Cu cation is bound by residues histidine 298 and histidine 324. Asparagine 353 carries an N-linked (GlcNAc...) asparagine glycan.

The protein belongs to the tyrosinase family. Requires Cu(2+) as cofactor.

The protein localises to the membrane. The protein operates within mycotoxin biosynthesis. In terms of biological role, tyrosinase-like protein; part of the gene cluster that mediates the biosynthesis of the phomopsins, a group of hexapeptide mycotoxins which infects lupins and causes lupinosis disease in livestock. Within the pathway, phomQ2 is involved in the generation of the common 13-membered macrocycle, possibly by catalyzing the hydroxylation of Tyr. The pathway starts with the processing of the precursor phomA by several endopeptidases including kexin proteases as well as the cluster-specific S41 family peptidase phomP1 and the oligopeptidase phomG to produce 10 identical copies of the hexapeptide Tyr-Val-Ile-Pro-Ile-Asp. After being excised from the precursor peptide, the core peptides are cyclized and modified post-translationally by enzymes encoded within the gene cluster. The timing and order of proteolysis of the phomA precursor and PTMs are still unknown. Two tyrosinase-like enzymes, phomQ1 and phomQ2, catalyze the chlorination and hydroxylation of Tyr, respectively. PhomYb, is proposed to be involved in the construction of the macrocyclic structure. The other 4 ustYa family proteins may be involved in PTMs that generate the unique structure of phomopsin A. PhomYa is required for the hydroxylation of C-beta of Tyr. PhomYc, phomYd, and phomYe are responsible for the biosynthesis of 2,3-dehydroisoleucine (dIle), 2,3-dehydroaspartic acid (dAsp), and 3,4-dehydroproline (dPro), respectively. While dIle formation by phomYc is indispensable for the installation of dAsp by phomYd, the order of the other PTMs have not been elucidated yet. Most of the biosynthetic enzymes likely have broad substrate specificity, and thus, there might be a metabolic grid from a precursor to phomopsin A. The enzyme(s) responsible for the biosynthesis of 3,4-dehydrovaline (dVal) have also not been identified yet. Finally, phomM acts as an S-adenosylmethionine-dependent alpha-N-methyltransferase that catalyzes two successive N-methylation reactions, converting N-desmethyl-phomopsin A to phomopsin A and phomopsin A further to an N,N-dimethylated congener called phomopsin E. In Diaporthe leptostromiformis (Lupinosis disease fungus), this protein is Tyrosinase-like protein phomQ2.